A 704-amino-acid polypeptide reads, in one-letter code: Elongation factor G (704 aa).

The 283-residue stretch at 8–290 folds into the tr-type G domain; sequence ARYRNIGISA…AVIDYLPSPV (283 aa). Residues 17–24, 88–92, and 142–145 each bind GTP; these read AHIDAGKT, DTPGH, and NKMD. N6-acetyllysine is present on residues Lys504 and Lys643.

Belongs to the TRAFAC class translation factor GTPase superfamily. Classic translation factor GTPase family. EF-G/EF-2 subfamily.

The protein resides in the cytoplasm. Its function is as follows. Catalyzes the GTP-dependent ribosomal translocation step during translation elongation. During this step, the ribosome changes from the pre-translocational (PRE) to the post-translocational (POST) state as the newly formed A-site-bound peptidyl-tRNA and P-site-bound deacylated tRNA move to the P and E sites, respectively. Catalyzes the coordinated movement of the two tRNA molecules, the mRNA and conformational changes in the ribosome. The chain is Elongation factor G from Shigella sonnei (strain Ss046).